We begin with the raw amino-acid sequence, 568 residues long: MARVFRRECHRVLDSERTTIQGADGMLMVPQLAIAGVNKQERGDFGVALSEVLAVWKYFLLDKLQLSHKDIPLPQSYDLIRKEYDCFLKRTNTVDLIDVFSMFKELRLNEDPEEPLTTMQMFQFLFGENESSEKPSQPVCPATPSCKAADCSPQIQRVVRRVFCSYLDLLVNSKNDLALTYTLDNPNRSLGHTAFTDLRHAACDSASSLFLTVTSFVRAIQLGGKGYAPPESHPLRKHVKGLSEFLNFVDQCQDILGETPNPREAGCKLVSSIRAALVKGRSAGDPVYLAAEESTKSLKERIGQIHAMHTQSTVGTGISPARPKAYAINHATAYGGRETVKVLMALLDEEALALPCRNKAELLSEDHAALNGSTGACLLALYKSPEAPTGSSPKSLRNRVLSQQEHIKSKVVRPTIRSQFACTYKEEELPLNRVLEFPSTSQIPTCVHPAPKKASSESDNGMDNRFKEATNLRCEGPGQSALGEHSGNAWNQTGGKSTQPEPLRRATGTLKRKLANRECTEQGREENQPPQKRPPAKAATGGPGKRNNKAVSKKLIAGQGKLTGFFRL.

Residues 442 to 555 (QIPTCVHPAP…RNNKAVSKKL (114 aa)) form a disordered region. The span at 488 to 500 (NAWNQTGGKSTQP) shows a compositional bias: polar residues. Over residues 515–527 (ANRECTEQGREEN) the composition is skewed to basic and acidic residues.

The protein belongs to the PARI family.

It localises to the cytoplasm. Its subcellular location is the nucleus. Its function is as follows. Required to suppress inappropriate homologous recombination, thereby playing a central role DNA repair and in the maintenance of genomic stability. The chain is PCNA-interacting partner (parpbp) from Danio rerio (Zebrafish).